Consider the following 81-residue polypeptide: ATP synthase subunit c, chloroplastic (81 aa).

Helical transmembrane passes span 3 to 23 and 57 to 77; these read PIIC…GAIG and LAFM…IIFA.

This sequence belongs to the ATPase C chain family. In terms of assembly, F-type ATPases have 2 components, F(1) - the catalytic core - and F(0) - the membrane proton channel. F(1) has five subunits: alpha(3), beta(3), gamma(1), delta(1), epsilon(1). F(0) has four main subunits: a(1), b(1), b'(1) and c(10-14). The alpha and beta chains form an alternating ring which encloses part of the gamma chain. F(1) is attached to F(0) by a central stalk formed by the gamma and epsilon chains, while a peripheral stalk is formed by the delta, b and b' chains.

Its subcellular location is the plastid. It localises to the chloroplast thylakoid membrane. In terms of biological role, f(1)F(0) ATP synthase produces ATP from ADP in the presence of a proton or sodium gradient. F-type ATPases consist of two structural domains, F(1) containing the extramembraneous catalytic core and F(0) containing the membrane proton channel, linked together by a central stalk and a peripheral stalk. During catalysis, ATP synthesis in the catalytic domain of F(1) is coupled via a rotary mechanism of the central stalk subunits to proton translocation. Its function is as follows. Key component of the F(0) channel; it plays a direct role in translocation across the membrane. A homomeric c-ring of between 10-14 subunits forms the central stalk rotor element with the F(1) delta and epsilon subunits. The sequence is that of ATP synthase subunit c, chloroplastic from Euglena gracilis.